A 189-amino-acid polypeptide reads, in one-letter code: Elongation factor P (189 aa).

At K34 the chain carries N6-(3,6-diaminohexanoyl)-5-hydroxylysine.

This sequence belongs to the elongation factor P family. May be beta-lysylated on the epsilon-amino group of Lys-34 by the combined action of EpmA and EpmB, and then hydroxylated on the C5 position of the same residue by EpmC (if this protein is present). Lysylation is critical for the stimulatory effect of EF-P on peptide-bond formation. The lysylation moiety may extend toward the peptidyltransferase center and stabilize the terminal 3-CCA end of the tRNA. Hydroxylation of the C5 position on Lys-34 may allow additional potential stabilizing hydrogen-bond interactions with the P-tRNA.

The protein resides in the cytoplasm. It functions in the pathway protein biosynthesis; polypeptide chain elongation. In terms of biological role, involved in peptide bond synthesis. Alleviates ribosome stalling that occurs when 3 or more consecutive Pro residues or the sequence PPG is present in a protein, possibly by augmenting the peptidyl transferase activity of the ribosome. Modification of Lys-34 is required for alleviation. In Legionella pneumophila (strain Lens), this protein is Elongation factor P.